A 1230-amino-acid chain; its full sequence is Cullin-associated NEDD8-dissociated protein 1 (1230 aa).

At Ala2 the chain carries N-acetylalanine. HEAT repeat units follow at residues 2–39 (ASAS…KDSI), 44–81 (DSER…KVKE), 83–119 (QVET…ELPP), 131–165 (CKKI…LSRQ), 171–208 (NFHP…SCGN), 210–247 (VFVD…QAGH), 248–282 (RIGE…FESF), 289–366 (EVYP…TRHE), 370–407 (EFYK…QTRP), 424–467 (PLTM…VLPG), 471–510 (QHIP…NHSP), and 515–552 (PHVQ…VIRP). Lys55 bears the N6-acetyllysine mark. The segment at 315–344 (DEDEDENAMDADGGDDDDQGSDDEYSDDDD) is disordered. Ser335 is subject to Phosphoserine. Ser558 bears the Phosphoserine mark. 15 HEAT repeats span residues 563-602 (PYIK…NLGD), 606-643 (SDLP…LKID), 646-683 (PVLG…NYSD), 688-725 (AMID…VYPS), 729-768 (KISG…TGTN), 770-808 (LGYM…ALTR), 809-845 (ACPK…LGEV), 852-889 (SGQL…GNLP), 890-927 (EYLP…GLKP), 928-960 (YVEN…KLTL), 961-998 (IDPE…DHPQ), 1002-1039 (PLLK…NKPS), 1043-1097 (DLLD…DSCL), 1099-1133 (RLDI…LSTL), and 1140-1189 (QRLD…IPEA). The residue at position 971 (Lys971) is an N6-acetyllysine.

The protein belongs to the CAND family. As to quaternary structure, interacts with TBP. Part of a complex that contains CUL1 and RBX1. Interacts with unneddylated cullins: interacts with CUL1, CUL2, CUL3, CUL4A, CUL4B and CUL5. Does not bind neddylated CUL1. Interaction with cullins is abolished in presence of COMMD1, which antagonizes with CAND1 for interacting with cullins. Interacts with ERCC6. Interacts with DCUN1D1, DCUN1D2, DCUN1D3, DCUN1D4 and DCUN1D5; these interactions are bridged by cullins and strongly inhibits the neddylation of cullins.

The protein localises to the cytoplasm. It is found in the nucleus. Its function is as follows. Key assembly factor of SCF (SKP1-CUL1-F-box protein) E3 ubiquitin ligase complexes that promotes the exchange of the substrate-recognition F-box subunit in SCF complexes, thereby playing a key role in the cellular repertoire of SCF complexes. Acts as a F-box protein exchange factor. The exchange activity of CAND1 is coupled with cycles of neddylation conjugation: in the deneddylated state, cullin-binding CAND1 binds CUL1-RBX1, increasing dissociation of the SCF complex and promoting exchange of the F-box protein. Probably plays a similar role in other cullin-RING E3 ubiquitin ligase complexes. The polypeptide is Cullin-associated NEDD8-dissociated protein 1 (CAND1) (Bos taurus (Bovine)).